A 196-amino-acid chain; its full sequence is ATP-dependent Clp protease proteolytic subunit (196 aa).

Ser-96 acts as the Nucleophile in catalysis. His-121 is a catalytic residue.

The protein belongs to the peptidase S14 family. Fourteen ClpP subunits assemble into 2 heptameric rings which stack back to back to give a disk-like structure with a central cavity, resembling the structure of eukaryotic proteasomes.

The protein resides in the cytoplasm. It catalyses the reaction Hydrolysis of proteins to small peptides in the presence of ATP and magnesium. alpha-casein is the usual test substrate. In the absence of ATP, only oligopeptides shorter than five residues are hydrolyzed (such as succinyl-Leu-Tyr-|-NHMec, and Leu-Tyr-Leu-|-Tyr-Trp, in which cleavage of the -Tyr-|-Leu- and -Tyr-|-Trp bonds also occurs).. In terms of biological role, cleaves peptides in various proteins in a process that requires ATP hydrolysis. Has a chymotrypsin-like activity. Plays a major role in the degradation of misfolded proteins. In Streptococcus equi subsp. zooepidemicus (strain H70), this protein is ATP-dependent Clp protease proteolytic subunit.